The primary structure comprises 840 residues: Probable alpha-glucuronidase A (840 aa).

An N-terminal signal peptide occupies residues 1–19; that stretch reads MWSGIPIFALLSSIGIAAA. 13 N-linked (GlcNAc...) asparagine glycosylation sites follow: Asn-50, Asn-149, Asn-222, Asn-262, Asn-279, Asn-310, Asn-465, Asn-527, Asn-576, Asn-610, Asn-682, Asn-723, and Asn-732.

It belongs to the glycosyl hydrolase 67 family.

Its subcellular location is the secreted. It carries out the reaction an alpha-D-glucuronoside + H2O = D-glucuronate + an alcohol. Functionally, alpha-glucuronidase involved in the hydrolysis of xylan, a major structural heterogeneous polysaccharide found in plant biomass representing the second most abundant polysaccharide in the biosphere, after cellulose. Releases 4-O-methylglucuronic acid from xylan. This is Probable alpha-glucuronidase A (aguA) from Aspergillus fumigatus (strain ATCC MYA-4609 / CBS 101355 / FGSC A1100 / Af293) (Neosartorya fumigata).